Consider the following 327-residue polypeptide: D-alanine--D-alanine ligase (327 aa).

Residues 113 to 312 (KRLWMTHGLA…YEDFVLQVLA (200 aa)) form the ATP-grasp domain. 139–194 (VADLGLPLIVKPAREGSSIGLTKVTAADQMRAAFDKAAALDNDVIAETFVDGAELT) contacts ATP. Residues Asp-266, Glu-279, and Asn-281 each contribute to the Mg(2+) site.

This sequence belongs to the D-alanine--D-alanine ligase family. Requires Mg(2+) as cofactor. Mn(2+) is required as a cofactor.

Its subcellular location is the cytoplasm. It carries out the reaction 2 D-alanine + ATP = D-alanyl-D-alanine + ADP + phosphate + H(+). It participates in cell wall biogenesis; peptidoglycan biosynthesis. In terms of biological role, cell wall formation. This chain is D-alanine--D-alanine ligase, found in Cupriavidus taiwanensis (strain DSM 17343 / BCRC 17206 / CCUG 44338 / CIP 107171 / LMG 19424 / R1) (Ralstonia taiwanensis (strain LMG 19424)).